Here is a 111-residue protein sequence, read N- to C-terminus: uncharacterized protein (111 aa).

This is an uncharacterized protein from Paracoccus denitrificans.